Consider the following 207-residue polypeptide: Ion-translocating oxidoreductase complex subunit G (207 aa).

A helical transmembrane segment spans residues 11–31; it reads GILLGFIALLCTIISAGIYFL. Residue Thr-175 is modified to FMN phosphoryl threonine.

This sequence belongs to the RnfG family. In terms of assembly, the complex is composed of six subunits: RnfA, RnfB, RnfC, RnfD, RnfE and RnfG. Requires FMN as cofactor.

The protein localises to the cell inner membrane. Part of a membrane-bound complex that couples electron transfer with translocation of ions across the membrane. This Haemophilus influenzae (strain PittEE) protein is Ion-translocating oxidoreductase complex subunit G.